Reading from the N-terminus, the 154-residue chain is TSET complex member tstD (154 aa).

Belongs to the adaptor complexes small subunit family. Component of the TSET complex, a heterohexamer composed of tstA, tstB, tstC, tstD, tstE and tstF, which may act in plasma membrane turnover. tstA, tstB, tstC and tstD are likely to be the core complex members with tstE and tstF acting as associated scaffold proteins.

The protein localises to the cell membrane. The protein resides in the cytoplasm. This chain is TSET complex member tstD, found in Dictyostelium discoideum (Social amoeba).